A 215-amino-acid chain; its full sequence is UPF0502 protein YceH (215 aa).

It belongs to the UPF0502 family.

This Salmonella arizonae (strain ATCC BAA-731 / CDC346-86 / RSK2980) protein is UPF0502 protein YceH.